The primary structure comprises 325 residues: Probable tRNA pseudouridine synthase B (325 aa).

The active-site Nucleophile is Asp-69. Residues 236 to 311 (LPKIVIKDSA…IAADIQRVMM (76 aa)) enclose the PUA domain.

This sequence belongs to the pseudouridine synthase TruB family. Type 2 subfamily.

It catalyses the reaction uridine(55) in tRNA = pseudouridine(55) in tRNA. Functionally, could be responsible for synthesis of pseudouridine from uracil-55 in the psi GC loop of transfer RNAs. The chain is Probable tRNA pseudouridine synthase B from Archaeoglobus fulgidus (strain ATCC 49558 / DSM 4304 / JCM 9628 / NBRC 100126 / VC-16).